The following is a 214-amino-acid chain: Phosphatidylcholine transfer protein (214 aa).

Methionine 1 bears the N-acetylmethionine mark. The 212-residue stretch at 1–212 (MAGAACCFSD…MVKACQNYHK (212 aa)) folds into the START domain. Residues tyrosine 72 and arginine 78 each contribute to the a 1,2-diacyl-sn-glycero-3-phosphocholine site. Serine 139 carries the post-translational modification Phosphoserine. Glutamine 157 provides a ligand contact to a 1,2-diacyl-sn-glycero-3-phosphocholine.

As to quaternary structure, interacts with ACOT13/THEM2. Abundant in liver of pups but levels in liver decrease 10-fold about 2 weeks after birth. In adult, highly expressed in epididymis, testis, kidney and bone-marrow derived mast cells.

It is found in the cytoplasm. In terms of biological role, catalyzes the transfer of phosphatidylcholine between membranes. Binds a single lipid molecule. The protein is Phosphatidylcholine transfer protein (Pctp) of Mus musculus (Mouse).